The primary structure comprises 93 residues: NADH-ubiquinone oxidoreductase chain 4L (93 aa).

Helical transmembrane passes span leucine 3–glycine 23, isoleucine 27–leucine 47, and isoleucine 55–glycine 75.

It belongs to the complex I subunit 4L family.

The protein resides in the mitochondrion membrane. The catalysed reaction is a ubiquinone + NADH + 5 H(+)(in) = a ubiquinol + NAD(+) + 4 H(+)(out). Core subunit of the mitochondrial membrane respiratory chain NADH dehydrogenase (Complex I) that is believed to belong to the minimal assembly required for catalysis. Complex I functions in the transfer of electrons from NADH to the respiratory chain. The immediate electron acceptor for the enzyme is believed to be ubiquinone. This is NADH-ubiquinone oxidoreductase chain 4L (ND4L) from Wickerhamomyces canadensis (Yeast).